The chain runs to 816 residues: Neuroligin-4, Y-linked (816 aa).

Residues M1–A43 form the signal peptide. At Q44 to S676 the chain is on the extracellular side. An N-linked (GlcNAc...) asparagine glycan is attached at N102. Disulfide bonds link C110-C146 and C306-C317. Residues Q359 to N364 form an interaction with NRXN1 region. Residues C476 and C510 are joined by a disulfide bond. N511 carries N-linked (GlcNAc...) asparagine glycosylation. A disordered region spans residues T636–E659. Over residues H649–P658 the composition is skewed to basic and acidic residues. A helical membrane pass occupies residues V677–Y697. Topologically, residues Y698–V816 are cytoplasmic. S712 is modified (phosphoserine).

Belongs to the type-B carboxylesterase/lipase family. In terms of assembly, homodimer. Interacts with NRXN1 in a calcium-dependent manner. Interaction with neurexins is mediated by heparan sulfate glycan modification on neurexin. Interacts through its C-terminus with DLG4/PSD-95 third PDZ domain. In terms of tissue distribution, expressed in fetal and adult brain, prostate and testis.

The protein resides in the cell membrane. The protein localises to the postsynaptic density membrane. Its function is as follows. Cell surface protein involved in cell-cell-interactions via its interactions with neurexin family members. This chain is Neuroligin-4, Y-linked (NLGN4Y), found in Homo sapiens (Human).